Consider the following 842-residue polypeptide: MVAFTIEQIRELMDKVTNVRNMSVIAHVDHGKSTLTDSLVQRAGIISAAKAGEARFTDTRKDEQERGITIKSTAISLYASMTDDDCKEIQQKTVGNSFLINLIDSPGHVDFSSEVTAALRVTDGALVVVDCVEGVCVQTETVLRQALGERIKPVVIINKVDRALLELQVTKEDLYQSFSRTIESVNVIISTYVDSSLGDSQVYPDKGTVAFGSGLHGWAFTVRQFATRYSKKFGVDRIKMMERLWGDSYFNPKTKKWTNKDKDAEGKTLERAFNMFVLDPIFRLFSSIMNFKKSEIPTLLEKLEINLKAEEKELEGKALLKVVMRKFLPAADALLEMIVIHLPSPVTAQAYRAETLYEGPADDASCIAIKNCDPTADLMVYISKMVPTSDKGRFYAFGRVFAGTVKSGQKVRIQGPNYQVGKKDDLFVKAIQRTVLMMGRFVEAIDDCPAGNIVGLVGVDQFLLKSGTITTNEASHNMKVMKFSVSPVVQVAVEVKNANDLPKLVEGLKRLSKSDPCVLTSMSESGEHIVAATGELHLEICLSDLQNDHAGIPLKISPPIVSYRETVNAESSMVALSKSPNKHNRIYVKAQPIDEEVSLDIEKGVINPRDDFKARARILADNHGWDVTDARKIWCFGPDGNGPNLVVDQTKAVQYLNEIKDSVVAAFQWATKEGPIFGENVRSVRVNILDVTLHADAIHRGGGQIIPTMRRVTYASMLLAEPAIQEPVFLVEIQCPENAIGGIYSVLNKKRGQVISEEQRPGTPLFTVKAYLPVNESFGFSGELRQSTGGQAFPQLIFDHWANLNGDPTDPTSKVGTIVKEKRERQGMKPDVPGYEEYYDKL.

Positions 17-253 constitute a tr-type G domain; sequence TNVRNMSVIA…LWGDSYFNPK (237 aa). GTP is bound by residues 26 to 33, 158 to 161, and 213 to 215; these read AHVDHGKS, NKVD, and SGL. A Diphthamide modification is found at His-699.

It belongs to the TRAFAC class translation factor GTPase superfamily. Classic translation factor GTPase family. EF-G/EF-2 subfamily.

Its subcellular location is the cytoplasm. The enzyme catalyses GTP + H2O = GDP + phosphate + H(+). Catalyzes the GTP-dependent ribosomal translocation step during translation elongation. During this step, the ribosome changes from the pre-translocational (PRE) to the post-translocational (POST) state as the newly formed A-site-bound peptidyl-tRNA and P-site-bound deacylated tRNA move to the P and E sites, respectively. Catalyzes the coordinated movement of the two tRNA molecules, the mRNA and conformational changes in the ribosome. The sequence is that of Elongation factor 2 (EFT1) from Debaryomyces hansenii (strain ATCC 36239 / CBS 767 / BCRC 21394 / JCM 1990 / NBRC 0083 / IGC 2968) (Yeast).